The sequence spans 123 residues: Large ribosomal subunit protein uL18 (123 aa).

Belongs to the universal ribosomal protein uL18 family. In terms of assembly, part of the 50S ribosomal subunit; part of the 5S rRNA/L5/L18/L25 subcomplex. Contacts the 5S and 23S rRNAs.

In terms of biological role, this is one of the proteins that bind and probably mediate the attachment of the 5S RNA into the large ribosomal subunit, where it forms part of the central protuberance. This chain is Large ribosomal subunit protein uL18, found in Chlamydia trachomatis serovar A (strain ATCC VR-571B / DSM 19440 / HAR-13).